A 402-amino-acid chain; its full sequence is Triose phosphate/phosphate translocator, non-green plastid, chloroplastic (402 aa).

The transit peptide at 1–82 (MQSSAVFSAS…SLDTNRFKTA (82 aa)) directs the protein to the chloroplast. Residues 83–98 (ATAVPEEGEGSGKMTK) are Chloroplast intermembrane-facing. Residues 99–119 (VLELGLLFAMWYLFNIYFNIY) form a helical membrane-spanning segment. Positions 118-236 (IYNKQVLKAL…IVGGVALASV (119 aa)) constitute an EamA domain. Over 120 to 131 (NKQVLKALHAPM) the chain is Lumenal. The helical transmembrane segment at 132-152 (TVTLVQFAVGSVLITFMWALN) threads the bilayer. Over 153 to 209 (LYKRPKISAAQLAAILPLAVVHTLGNLFTNMSLGKVSVSFTHTIKAMEPFFSVVLSA) the chain is Chloroplast intermembrane. The helical transmembrane segment at 210-230 (MFLGEVPTPWVIGSIIPIVGG) threads the bilayer. The Lumenal portion of the chain corresponds to 231–278 (VALASVTEVSFNWAGFLSAMASNLTNQSRNVLSKKVMVKKDDSLDNIT). Residues 279–298 (LFSIITLMSLFLMAPVTFFS) form a helical membrane-spanning segment. Topologically, residues 299–374 (EGIKFTPSYI…IFFKTPVSPV (76 aa)) are chloroplast intermembrane. The chain crosses the membrane as a helical span at residues 375–394 (NAFGTGIALAGVFLYSRVKR). The Lumenal portion of the chain corresponds to 395-402 (IKPKPKTA).

The protein belongs to the TPT transporter family. TPT (TC 2.A.7.9) subfamily. As to quaternary structure, homodimer.

It is found in the plastid. The protein localises to the chloroplast membrane. Functionally, mediates the export of fixed carbons from the chloroplasts into the cytosol in the form of triose phosphates. In Brassica oleracea var. botrytis (Cauliflower), this protein is Triose phosphate/phosphate translocator, non-green plastid, chloroplastic (NGTPT).